Reading from the N-terminus, the 459-residue chain is Spermatogenesis-associated protein 1 (459 aa).

Basic and acidic residues predominate over residues 193–205 (LKELPNKNQEEAG). Positions 193 to 213 (LKELPNKNQEEAGGKATAEKS) are disordered. 2 coiled-coil regions span residues 287-374 (TDIS…YKKL) and 400-453 (LIIQ…KKII).

As to quaternary structure, interacts with IFT20.

It localises to the cytoplasmic vesicle. The protein resides in the secretory vesicle. Its subcellular location is the acrosome. This is Spermatogenesis-associated protein 1 (SPATA1) from Homo sapiens (Human).